The chain runs to 205 residues: Thymidine kinase (205 aa).

ATP contacts are provided by residues 9-16 and 87-90; these read SAMNAGKS and DECQ. Glu88 serves as the catalytic Proton acceptor. The Zn(2+) site is built by Cys145, Cys147, Cys182, and His185.

Belongs to the thymidine kinase family. In terms of assembly, homotetramer.

It is found in the cytoplasm. The enzyme catalyses thymidine + ATP = dTMP + ADP + H(+). Allosteric enzyme which is feedback inhibited by dTTP and activated by a number of dNDP and dNTP. Its function is as follows. Phosphorylates both thymidine and deoxyuridine. In Escherichia coli O157:H7, this protein is Thymidine kinase.